We begin with the raw amino-acid sequence, 262 residues long: Nurim (262 aa).

At 1–4 (MAPA) the chain is on the nuclear side. Residues 5–28 (LLLVPAALASFILAFGTGVEFVRF) traverse the membrane as a helical segment. Over 29-58 (TSLRPLLGGIPESGGPDARQGWLAALQDQS) the chain is Perinuclear space. A helical transmembrane segment spans residues 59–80 (ILVPLAWDLGLLLLFVGQHSLM). The Nuclear portion of the chain corresponds to 81–97 (ATETVKAWMSRYFGVLQ). The chain crosses the membrane as a helical span at residues 98–114 (RSLYVACTALALQLVMR). At 115–133 (YWEPVPRGPVLWEAQAEPW) the chain is on the perinuclear space side. Residues 134–164 (ATWVPLLCFVLHVISWLLIFSILLVFDYAEL) form a helical membrane-spanning segment. Over 165 to 191 (MGLKQVYYHVLGLGEPLALKSPRALRL) the chain is Nuclear. A helical transmembrane segment spans residues 192 to 210 (FSHLRHPVCVELLTVLWVV). At 211–216 (PTLGTD) the chain is on the perinuclear space side. Residues 217-234 (RLLLALLLTLYLGLAHGL) form a helical membrane-spanning segment. At 235 to 262 (DQQDLRYLRAQLQRKLHLLSRPQDGEAE) the chain is on the nuclear side.

Belongs to the nurim family.

The protein localises to the nucleus inner membrane. This Sus scrofa (Pig) protein is Nurim (NRM).